A 312-amino-acid polypeptide reads, in one-letter code: MIEFEKPKITKFDESENYGKFVVEPLERGYGTTLGNSLRRVLLSSLPGAAVTSIQIEGVQHEFATIPGVREDVIQIVLAVKGIAIKSYVESEKQIELDVTGPMDVTAGDILTDSDIEIVNKDHYLFSIAEGHSMRAVMTVKKGYGYVPADENKVDGAPIGTIAVDSIYTPVSKVNYQVEPARVGGDSSYDKLTLEITTNGTIVSDEALSLSAKILTDHLNLFVDLSEVAAEAETLVVKDEVKTERVLDKIIEEMDFSVRTYNGLKRAGINTVADIVEMSEADMIKVKNLGHKSVEEVKVKLTELGLSLKKRK.

The interval 1 to 226 (MIEFEKPKIT…DHLNLFVDLS (226 aa)) is alpha N-terminal domain (alpha-NTD). Positions 243–312 (TERVLDKIIE…ELGLSLKKRK (70 aa)) are alpha C-terminal domain (alpha-CTD).

Belongs to the RNA polymerase alpha chain family. Homodimer. The RNAP catalytic core consists of 2 alpha, 1 beta, 1 beta' and 1 omega subunit. When a sigma factor is associated with the core the holoenzyme is formed, which can initiate transcription.

The enzyme catalyses RNA(n) + a ribonucleoside 5'-triphosphate = RNA(n+1) + diphosphate. Functionally, DNA-dependent RNA polymerase catalyzes the transcription of DNA into RNA using the four ribonucleoside triphosphates as substrates. The chain is DNA-directed RNA polymerase subunit alpha from Lactococcus lactis subsp. cremoris (strain MG1363).